The sequence spans 310 residues: Putative integrase/recombinase y4rE (310 aa).

The 78-residue stretch at 6-83 folds into the Core-binding (CB) domain; sequence RFLGEKVERY…VLRRFYEYLA (78 aa). A Tyr recombinase domain is found at 104 to 301; the sequence is PPPRILSEAE…SVDLLAMAAE (198 aa). Catalysis depends on residues Arg148, Lys173, His245, Arg248, and His279. Residue Tyr288 is the O-(3'-phospho-DNA)-tyrosine intermediate of the active site.

It belongs to the 'phage' integrase family.

The protein is Putative integrase/recombinase y4rE of Sinorhizobium fredii (strain NBRC 101917 / NGR234).